A 382-amino-acid polypeptide reads, in one-letter code: tRNA-specific 2-thiouridylase MnmA (382 aa).

Residues 18-25 (AMSGGVDS) and leucine 44 contribute to the ATP site. Residue cysteine 112 is the Nucleophile of the active site. Residues cysteine 112 and cysteine 209 are joined by a disulfide bond. Position 136 (glycine 136) interacts with ATP. Residues 159-161 (RDQ) form an interaction with tRNA region. The active-site Cysteine persulfide intermediate is cysteine 209.

Belongs to the MnmA/TRMU family.

The protein resides in the cytoplasm. The catalysed reaction is S-sulfanyl-L-cysteinyl-[protein] + uridine(34) in tRNA + AH2 + ATP = 2-thiouridine(34) in tRNA + L-cysteinyl-[protein] + A + AMP + diphosphate + H(+). Its function is as follows. Catalyzes the 2-thiolation of uridine at the wobble position (U34) of tRNA, leading to the formation of s(2)U34. This is tRNA-specific 2-thiouridylase MnmA from Methylobacterium nodulans (strain LMG 21967 / CNCM I-2342 / ORS 2060).